We begin with the raw amino-acid sequence, 46 residues long: Major urinary protein (46 aa).

Asn15 is a glycosylation site (N-linked (GlcNAc...) asparagine).

It belongs to the calycin superfamily. Lipocalin family. Found in many tissues including liver, urine, preputial gland, clitoral gland, submandibular gland and salivary gland.

The protein localises to the secreted. In terms of biological role, binds pheromones that are released from drying urine of males. These pheromones affect the sexual behavior of females. Acts as a shuttle for pheromonal communication between individuals of the same species. The chain is Major urinary protein from Rattus rattus (Black rat).